A 260-amino-acid chain; its full sequence is Triosephosphate isomerase (260 aa).

Residue 11-13 participates in substrate binding; it reads NWK. Residue H103 is the Electrophile of the active site. Catalysis depends on E175, which acts as the Proton acceptor. Substrate-binding positions include G181, S220, and 241–242; that span reads GG.

Belongs to the triosephosphate isomerase family. Homodimer.

The protein localises to the cytoplasm. The enzyme catalyses D-glyceraldehyde 3-phosphate = dihydroxyacetone phosphate. The protein operates within carbohydrate biosynthesis; gluconeogenesis. It participates in carbohydrate degradation; glycolysis; D-glyceraldehyde 3-phosphate from glycerone phosphate: step 1/1. Involved in the gluconeogenesis. Catalyzes stereospecifically the conversion of dihydroxyacetone phosphate (DHAP) to D-glyceraldehyde-3-phosphate (G3P). This chain is Triosephosphate isomerase, found in Shewanella woodyi (strain ATCC 51908 / MS32).